A 118-amino-acid chain; its full sequence is UPF0295 protein BcerKBAB4_0454 (118 aa).

The next 2 membrane-spanning stretches (helical) occupy residues 12 to 32 and 43 to 63; these read IRTFALSLVFIGLFIAYLGVF and FMMVGFLAVIASTVVYFWIGM.

This sequence belongs to the UPF0295 family.

It localises to the cell membrane. The protein is UPF0295 protein BcerKBAB4_0454 of Bacillus mycoides (strain KBAB4) (Bacillus weihenstephanensis).